A 355-amino-acid chain; its full sequence is Probable butyrate kinase (355 aa).

Belongs to the acetokinase family.

It is found in the cytoplasm. It carries out the reaction butanoate + ATP = butanoyl phosphate + ADP. The protein is Probable butyrate kinase of Listeria monocytogenes serotype 4b (strain CLIP80459).